A 45-amino-acid chain; its full sequence is Cytochrome b559 subunit beta (45 aa).

Residues 20-36 (WLAVHTLGVPTVFFLGA) traverse the membrane as a helical segment. Residue His24 coordinates heme.

It belongs to the PsbE/PsbF family. Heterodimer of an alpha subunit and a beta subunit. PSII is composed of 1 copy each of membrane proteins PsbA, PsbB, PsbC, PsbD, PsbE, PsbF, PsbH, PsbI, PsbJ, PsbK, PsbL, PsbM, PsbT, PsbX, PsbY, PsbZ, Psb30/Ycf12, peripheral proteins PsbO, CyanoQ (PsbQ), PsbU, PsbV and a large number of cofactors. It forms dimeric complexes. Requires heme b as cofactor.

The protein localises to the cellular thylakoid membrane. In terms of biological role, this b-type cytochrome is tightly associated with the reaction center of photosystem II (PSII). PSII is a light-driven water:plastoquinone oxidoreductase that uses light energy to abstract electrons from H(2)O, generating O(2) and a proton gradient subsequently used for ATP formation. It consists of a core antenna complex that captures photons, and an electron transfer chain that converts photonic excitation into a charge separation. The protein is Cytochrome b559 subunit beta of Nostoc punctiforme (strain ATCC 29133 / PCC 73102).